Consider the following 88-residue polypeptide: UPF0250 protein Shewmr4_0986 (88 aa).

The protein belongs to the UPF0250 family.

The polypeptide is UPF0250 protein Shewmr4_0986 (Shewanella sp. (strain MR-4)).